The following is a 181-amino-acid chain: Copper-resistant cuproprotein CopI (181 aa).

The N-terminal stretch at 1–24 (MFPRRLLPASLIVLGVLFGASAQA) is a signal peptide. His-79, Cys-163, His-168, and Met-173 together coordinate Cu(2+).

Belongs to the CopI family.

It localises to the periplasm. Its function is as follows. Involved in copper tolerance. This Pseudomonas aeruginosa (strain ATCC 15692 / DSM 22644 / CIP 104116 / JCM 14847 / LMG 12228 / 1C / PRS 101 / PAO1) protein is Copper-resistant cuproprotein CopI.